The sequence spans 127 residues: Holo-[acyl-carrier-protein] synthase (127 aa).

Mg(2+) is bound by residues Asp9 and Glu58.

The protein belongs to the P-Pant transferase superfamily. AcpS family. Mg(2+) is required as a cofactor.

It localises to the cytoplasm. The enzyme catalyses apo-[ACP] + CoA = holo-[ACP] + adenosine 3',5'-bisphosphate + H(+). In terms of biological role, transfers the 4'-phosphopantetheine moiety from coenzyme A to a Ser of acyl-carrier-protein. The polypeptide is Holo-[acyl-carrier-protein] synthase (Shewanella baltica (strain OS195)).